An 83-amino-acid chain; its full sequence is Neurotoxin 3FTx-RI (83 aa).

Residues 1–21 (MKTLLLTLVVLTIVCLDLGHT) form the signal peptide. 4 disulfide bridges follow: Cys24–Cys45, Cys38–Cys62, Cys64–Cys75, and Cys76–Cys81.

It belongs to the three-finger toxin family. Short-chain subfamily. Type I alpha-neurotoxin sub-subfamily. As to expression, expressed by the venom gland.

It localises to the secreted. Functionally, binds to muscle nicotinic acetylcholine receptor (nAChR) and inhibit acetylcholine from binding to the receptor, thereby impairing neuromuscular transmission. This is Neurotoxin 3FTx-RI from Bungarus fasciatus (Banded krait).